The sequence spans 617 residues: Dihydroxy-acid dehydratase (617 aa).

Asp81 contacts Mg(2+). Cys122 contributes to the [2Fe-2S] cluster binding site. Residues Asp123 and Lys124 each coordinate Mg(2+). Lys124 is modified (N6-carboxylysine). Cys195 contributes to the [2Fe-2S] cluster binding site. Glu491 contributes to the Mg(2+) binding site. The Proton acceptor role is filled by Ser517.

It belongs to the IlvD/Edd family. As to quaternary structure, homodimer. [2Fe-2S] cluster is required as a cofactor. Requires Mg(2+) as cofactor.

It catalyses the reaction (2R)-2,3-dihydroxy-3-methylbutanoate = 3-methyl-2-oxobutanoate + H2O. The enzyme catalyses (2R,3R)-2,3-dihydroxy-3-methylpentanoate = (S)-3-methyl-2-oxopentanoate + H2O. Its pathway is amino-acid biosynthesis; L-isoleucine biosynthesis; L-isoleucine from 2-oxobutanoate: step 3/4. It participates in amino-acid biosynthesis; L-valine biosynthesis; L-valine from pyruvate: step 3/4. Functionally, functions in the biosynthesis of branched-chain amino acids. Catalyzes the dehydration of (2R,3R)-2,3-dihydroxy-3-methylpentanoate (2,3-dihydroxy-3-methylvalerate) into 2-oxo-3-methylpentanoate (2-oxo-3-methylvalerate) and of (2R)-2,3-dihydroxy-3-methylbutanoate (2,3-dihydroxyisovalerate) into 2-oxo-3-methylbutanoate (2-oxoisovalerate), the penultimate precursor to L-isoleucine and L-valine, respectively. The protein is Dihydroxy-acid dehydratase of Hydrogenovibrio crunogenus (strain DSM 25203 / XCL-2) (Thiomicrospira crunogena).